The sequence spans 518 residues: U3 small nucleolar RNA-associated protein 15 homolog (518 aa).

Ala-2 carries the post-translational modification N-acetylalanine. WD repeat units follow at residues 36–75, 78–117, 120–159, 162–202, 204–242, 246–285, and 287–326; these read KEFG…PIKT, RFKD…PLRQ, GHTK…EILT, EHSD…SVLS, EHGQ…QLLV, NHHK…VVHS, and DYAA…KKES. A Glycyl lysine isopeptide (Lys-Gly) (interchain with G-Cter in SUMO2) cross-link involves residue Lys-249.

Part of the small subunit (SSU) processome, composed of more than 70 proteins and the RNA chaperone small nucleolar RNA (snoRNA) U3. May be a component of the proposed t-UTP subcomplex of the ribosomal small subunit (SSU) processome containing at least UTP4, WDR43, HEATR1, UTP15, WDR75. Interacts directly with UTP4 and WDR43.

It localises to the nucleus. Its subcellular location is the nucleolus. Its function is as follows. Ribosome biogenesis factor. Involved in nucleolar processing of pre-18S ribosomal RNA. Required for optimal pre-ribosomal RNA transcription by RNA polymerase I. Part of the small subunit (SSU) processome, first precursor of the small eukaryotic ribosomal subunit. During the assembly of the SSU processome in the nucleolus, many ribosome biogenesis factors, an RNA chaperone and ribosomal proteins associate with the nascent pre-rRNA and work in concert to generate RNA folding, modifications, rearrangements and cleavage as well as targeted degradation of pre-ribosomal RNA by the RNA exosome. The chain is U3 small nucleolar RNA-associated protein 15 homolog from Homo sapiens (Human).